The following is a 777-amino-acid chain: 5-methyltetrahydropteroyltriglutamate--homocysteine methyltransferase (777 aa).

Residues 17-20 (RELK) and Lys-132 each bind 5-methyltetrahydropteroyltri-L-glutamate. L-homocysteine-binding positions include 455-457 (IGS) and Glu-508. L-methionine contacts are provided by residues 455-457 (IGS) and Glu-508. Residues 539–540 (RC) and Trp-585 each bind 5-methyltetrahydropteroyltri-L-glutamate. Asp-623 serves as a coordination point for L-homocysteine. Residue Asp-623 coordinates L-methionine. Glu-629 serves as a coordination point for 5-methyltetrahydropteroyltri-L-glutamate. The Zn(2+) site is built by His-665, Cys-667, and Glu-689. His-718 (proton donor) is an active-site residue. Residue Cys-750 participates in Zn(2+) binding.

The protein belongs to the vitamin-B12 independent methionine synthase family. Zn(2+) serves as cofactor.

The enzyme catalyses 5-methyltetrahydropteroyltri-L-glutamate + L-homocysteine = tetrahydropteroyltri-L-glutamate + L-methionine. The protein operates within amino-acid biosynthesis; L-methionine biosynthesis via de novo pathway; L-methionine from L-homocysteine (MetE route): step 1/1. Catalyzes the transfer of a methyl group from 5-methyltetrahydrofolate to homocysteine resulting in methionine formation. The polypeptide is 5-methyltetrahydropteroyltriglutamate--homocysteine methyltransferase (Caulobacter vibrioides (strain ATCC 19089 / CIP 103742 / CB 15) (Caulobacter crescentus)).